The following is a 473-amino-acid chain: Glutamyl-tRNA reductase (473 aa).

Residues 49–52, Ser-109, 114–116, and Gln-120 contribute to the substrate site; these read TCNR and ESQ. Residue Cys-50 is the Nucleophile of the active site. The tract at residues 196-215 is disordered; it reads LDGGGVAAEGPRHAVTPEPP. Position 226–231 (226–231) interacts with NADP(+); that stretch reads GAGAVG.

This sequence belongs to the glutamyl-tRNA reductase family. As to quaternary structure, homodimer.

The catalysed reaction is (S)-4-amino-5-oxopentanoate + tRNA(Glu) + NADP(+) = L-glutamyl-tRNA(Glu) + NADPH + H(+). The protein operates within porphyrin-containing compound metabolism; protoporphyrin-IX biosynthesis; 5-aminolevulinate from L-glutamyl-tRNA(Glu): step 1/2. Catalyzes the NADPH-dependent reduction of glutamyl-tRNA(Glu) to glutamate 1-semialdehyde (GSA). This chain is Glutamyl-tRNA reductase, found in Frankia casuarinae (strain DSM 45818 / CECT 9043 / HFP020203 / CcI3).